Reading from the N-terminus, the 488-residue chain is Regulatory protein ViaA (488 aa).

It belongs to the ViaA family. Homodimer. Interacts with RavA.

It is found in the cytoplasm. Functionally, component of the RavA-ViaA chaperone complex, which may act on the membrane to optimize the function of some of the respiratory chains. ViaA stimulates the ATPase activity of RavA. This is Regulatory protein ViaA from Yersinia pseudotuberculosis serotype O:1b (strain IP 31758).